A 441-amino-acid chain; its full sequence is Probable xylan O-acetyltransferase 10 (441 aa).

Topologically, residues 1 to 19 are cytoplasmic; sequence MMKPQHGGMAGHGGGRTRS. The chain crosses the membrane as a helical; Signal-anchor for type II membrane protein span at residues 20 to 40; that stretch reads PFLTSYALTLAFITFVSVLYF. At 41–441 the chain is on the lumenal side; it reads KDFSSTLHQP…ELLYSKLFFP (401 aa). The tract at residues 50-81 is disordered; that stretch reads PFLTRPPPHRRQIARPRAPSHHHGGGSSSGGG. Positions 56 to 73 are enriched in basic residues; the sequence is PPHRRQIARPRAPSHHHG. 4 cysteine pairs are disulfide-bonded: Cys97-Cys148, Cys119-Cys184, Cys128-Cys422, and Cys341-Cys418. N-linked (GlcNAc...) asparagine glycosylation is present at Asn154. The short motif at 171–173 is the GDS motif element; sequence GDS. Ser173 (nucleophile) is an active-site residue. 3 N-linked (GlcNAc...) asparagine glycosylation sites follow: Asn212, Asn343, and Asn381. Catalysis depends on Asp417, which acts as the Proton donor. The short motif at 417–420 is the DXXH motif element; the sequence is DCTH. His420 serves as the catalytic Proton acceptor.

This sequence belongs to the PC-esterase family. TBL subfamily. Expressed in roots, leaves and stems.

The protein resides in the golgi apparatus membrane. Probable xylan acetyltransferase required for 2-O- and 3-O-monoacetylation of xylosyl residues in xylan. Possesses extremely low activity in vitro. The polypeptide is Probable xylan O-acetyltransferase 10 (Oryza sativa subsp. japonica (Rice)).